Reading from the N-terminus, the 398-residue chain is Ornithine aminotransferase (398 aa).

Lys-255 bears the N6-(pyridoxal phosphate)lysine mark.

This sequence belongs to the class-III pyridoxal-phosphate-dependent aminotransferase family. OAT subfamily. Pyridoxal 5'-phosphate serves as cofactor.

It is found in the cytoplasm. It catalyses the reaction a 2-oxocarboxylate + L-ornithine = L-glutamate 5-semialdehyde + an L-alpha-amino acid. The protein operates within amino-acid biosynthesis; L-proline biosynthesis; L-glutamate 5-semialdehyde from L-ornithine: step 1/1. Functionally, catalyzes the interconversion of ornithine to glutamate semialdehyde. This chain is Ornithine aminotransferase, found in Geobacillus sp. (strain WCH70).